The following is a 51-amino-acid chain: uncharacterized protein (51 aa).

Residues 10-29 (LFLYHPLFLLLLYIYLVLFI) traverse the membrane as a helical segment.

It localises to the plastid. It is found in the chloroplast membrane. This is an uncharacterized protein from Anthoceros angustus (Hornwort).